The following is a 501-amino-acid chain: uncharacterized protein (501 aa).

Disordered stretches follow at residues 179–404 (EKTS…DETA) and 480–501 (SDDT…DDSD). Residues 191–200 (SRNESQDKSR) show a composition bias toward basic and acidic residues. The span at 201–214 (DKSRKKVCNTHKNK) shows a compositional bias: basic residues. Positions 215 to 226 (KTLDNVKPDKNI) are enriched in basic and acidic residues. Low complexity predominate over residues 231-274 (SSNKFTTNKPKSNKNSSDSDGSTKTTKSTRSTKSTKSSKSQKST). A compositionally biased stretch (basic and acidic residues) spans 304–316 (NPKESINHKKNDS). Residues 333 to 352 (DSTNCRKSNRTTTRDVTNSD) are compositionally biased toward polar residues. Over residues 379 to 403 (EQSDLTEDETEENVSEEDETEEDET) the composition is skewed to acidic residues.

This is an uncharacterized protein from Acanthamoeba polyphaga mimivirus (APMV).